A 118-amino-acid polypeptide reads, in one-letter code: MARVKRGVIARKRHKKILKLAKGYYGARSRVFRVAKQAVIKAGQYAYRDRRQKKRQFRALWIARINAGARVNGLSYSRFIAGLKKASIEIDRKVLAELAVNEKAVFAAIVEKAKATLA.

Belongs to the bacterial ribosomal protein bL20 family.

Its function is as follows. Binds directly to 23S ribosomal RNA and is necessary for the in vitro assembly process of the 50S ribosomal subunit. It is not involved in the protein synthesizing functions of that subunit. This Pseudomonas fluorescens (strain SBW25) protein is Large ribosomal subunit protein bL20.